The following is a 1037-amino-acid chain: PH and SEC7 domain-containing protein 3 (1037 aa).

The interval 37-70 (EEKTPDSSDHGGSTLLPPTVTNEFPEYGTMEEGG) is disordered. At S76 the chain carries Phosphoserine. Disordered stretches follow at residues 169–189 (TASHKPQRAHRTFPVGPGKSP), 236–255 (RVPESACPVSSSSAGSHNPV), 262–284 (REQRSDLGREHPRGYDRGGSMGR), 304–335 (EAESRHPPERTASPVSKEFAKRPSHSSPACGV), and 353–375 (APSERPGTSAGTLSPMPLGESGE). A compositionally biased stretch (low complexity) spans 237–251 (VPESACPVSSSSAGS). Residues 262-277 (REQRSDLGREHPRGYD) show a composition bias toward basic and acidic residues. One can recognise an SEC7 domain in the interval 515 to 723 (NSVYTRGPQE…KALYNSIKNE (209 aa)). The span at 730 to 747 (DDEEKKKSPSEGTDEKAN) shows a compositional bias: basic and acidic residues. Residues 730-762 (DDEEKKKSPSEGTDEKANGTHPKTISRIGSTTN) are disordered. A compositionally biased stretch (polar residues) spans 750–762 (HPKTISRIGSTTN). S759 is subject to Phosphoserine. Positions 774-887 (AVYKSGFLAR…WINKINCVAA (114 aa)) constitute a PH domain. Positions 911–941 (ATTTKLSQEEQLKSHESKLKQITTELAEHRS) form a coiled coil. A disordered region spans residues 984–1037 (LLTTDGNEPVGLKKSHSSPSLNPDASPVTAKVKRNVSERKDHRPETPGIKQKVT). Phosphoserine is present on residues S998, S1000, S1001, S1003, and S1009. Over residues 1018 to 1028 (NVSERKDHRPE) the composition is skewed to basic and acidic residues.

As to expression, ubiquitously expressed, with highest levels in liver. Present in brain, with highest levels in olfactory bulb, cortex, hippocampal pyramidal cell layer and cerebellar granule cell layer (at protein level).

The protein localises to the cell membrane. Its subcellular location is the cell projection. The protein resides in the ruffle membrane. It localises to the postsynaptic density. Guanine nucleotide exchange factor for ARF6. This chain is PH and SEC7 domain-containing protein 3 (Psd3), found in Mus musculus (Mouse).